Reading from the N-terminus, the 2135-residue chain is Protein SUBSTANDARD STARCH GRAIN 4, chloroplastic (2135 aa).

2 stretches are compositionally biased toward low complexity: residues 1–10 and 72–84; these read MSHCLRASPF and QHQP…RQQQ. A chloroplast-targeting transit peptide spans 1–42; sequence MSHCLRASPFLSPPPPLLHPSRRRRHRQGGCIHTSPGTRPLV. Disordered stretches follow at residues 1-44 and 58-89; these read MSHC…LVAR and SDSS…PPPP. Residues 43-104 are Stromal-facing; sequence ARARFDPPPL…ASLAPLWREG (62 aa). A helical transmembrane segment spans residues 105–125; it reads LFLVRCSVFAAALSVAAALSW. The Chloroplast intermembrane portion of the chain corresponds to 126–2135; it reads YAQLRARSFV…LFEYSATSQG (2010 aa). Basic residues predominate over residues 361–370; it reads RRRYRRKAHS. Disordered regions lie at residues 361–382, 401–492, and 1843–1869; these read RRRY…SSQQ, SGNP…QVSE, and FLGS…SFKP. Polar residues-rich tracts occupy residues 373-382, 454-490, and 1846-1856; these read ISDTDNSSQQ, NFAS…NEQV, and SLSTSPDGQQS. Residues 1857–1866 show a composition bias toward basic and acidic residues; that stretch reads ETERTPEHGS.

The protein belongs to the TamB family. In terms of assembly, part of the TIC complex, which can interact with components of the TOC complex to form a larger import complex. As to expression, highly expressed in third leaf and developing seeds. Expressed in anthers, pistils, flag leaves and young panicles.

It is found in the plastid. The protein resides in the chloroplast inner membrane. Its subcellular location is the chloroplast intermembrane space. It localises to the chloroplast. The protein localises to the amyloplast. Its function is as follows. Part of the inner chloroplast membrane translocon complex (TIC) which associates with the outer chloroplast membrane translocon complex (TOC) and forms a supercomplex involved in protein precursor import into the chloroplast stroma. Required for the regulation of starch granule size in amyloplasts. This chain is Protein SUBSTANDARD STARCH GRAIN 4, chloroplastic, found in Oryza sativa subsp. japonica (Rice).